The primary structure comprises 294 residues: Nucleotide-binding protein Maqu_2718 (294 aa).

8–15 (GRSGSGKS) serves as a coordination point for ATP. Residue 61 to 64 (DARN) participates in GTP binding.

It belongs to the RapZ-like family.

In terms of biological role, displays ATPase and GTPase activities. The chain is Nucleotide-binding protein Maqu_2718 from Marinobacter nauticus (strain ATCC 700491 / DSM 11845 / VT8) (Marinobacter aquaeolei).